The sequence spans 391 residues: PPE family protein PPE15 (391 aa).

A eukaryotic-like SH3 domain region spans residues 312–367; that stretch reads LGEATLVGRLSVPAAWSTAAPATTAGATALEGSGWTVAAEEAGPVTGMMPGMASAA.

The protein belongs to the mycobacterial PPE family. In terms of assembly, forms a heterodimer with PE8. The dimer forms a 1:1:1 heterotrimeric complex with EspG5. PPE15 interacts directly with EspG5. Interacts via the C-terminal region with host Toll-like receptor 4 (TLR4). Interacts, also via the C-terminal region, with two cytosolic subunits of the host NOX complex, p47phox (NCF1) and p67phox (NCF2).

The protein localises to the secreted. Its subcellular location is the host mitochondrion. Its function is as follows. May play a critical role in the homeostasis of triacylglycerol-containing lipid droplets in M.tuberculosis and influence the entry of the pathogen into a dormant state. Is recognized by host TLR4 receptor at the macrophage cell surface, which modulates the host immune response, induces mitochondrial stress and perturbations, and induces macrophage apoptosis leading to pathogen persistence. Also downregulates NOX-mediated reactive oxygen species (ROS) generation in THP1 macrophages, which increases intracellular survival of bacteria. PPE15 interacts with two subunits of the host NADPH oxidase (NOX) complex in the cytosol of macrophages and prevents their migration to the membrane, which inhibits the assembly of the NOX complex at the plasma membrane of THP1 macrophages. This leads to reduced NOX activity and diminished ROS generation. The chain is PPE family protein PPE15 (PPE15) from Mycobacterium tuberculosis (strain CDC 1551 / Oshkosh).